The chain runs to 363 residues: 1-aminocyclopropane-1-carboxylate oxidase homolog (363 aa).

Positions 212-312 constitute a Fe2OG dioxygenase domain; sequence FHLFCSCNYY…MSITCFFGES (101 aa). Positions 236, 238, and 292 each coordinate Fe cation.

It belongs to the iron/ascorbate-dependent oxidoreductase family.

This is 1-aminocyclopropane-1-carboxylate oxidase homolog (ACO3) from Solanum lycopersicum (Tomato).